A 112-amino-acid chain; its full sequence is Pediocin PA-1 immunity protein (112 aa).

Functionally, imparts immunity to pediocin PA-1/ACH to naturally sensitive host strains. The chain is Pediocin PA-1 immunity protein (pedB) from Pediococcus acidilactici.